Here is a 491-residue protein sequence, read N- to C-terminus: Transmembrane protein 39B (491 aa).

Residues 1 to 56 are disordered; the sequence is MAGGRRGANRTTYCRSPLSNDTGSVGNGNHSTSSPVTGVRSRTRNGSGTGMSSPPL. 4 N-linked (GlcNAc...) asparagine glycosylation sites follow: N9, N20, N29, and N45. 2 stretches are compositionally biased toward polar residues: residues 9–36 and 44–56; these read NRTT…SSPV and RNGS…SPPL. Transmembrane regions (helical) follow at residues 79 to 99, 115 to 135, 152 to 172, 185 to 205, 290 to 310, 322 to 342, 423 to 443, and 449 to 469; these read LFEL…YVNI, TSLN…IVLA, LSFP…TLAG, TYSV…IPFF, EVLV…VWFV, CELF…HLLP, ILNI…YSLM, and HQTI…FKLL.

This sequence belongs to the TMEM39 family. In terms of tissue distribution, expressed in the ovary, followed by the intestine and brain.

It localises to the endoplasmic reticulum membrane. Functionally, may protect the cells against DNA damage caused by exposure to the cold-warming stress and facilitates tissue damage repair during the recovery phase. The protein is Transmembrane protein 39B of Danio rerio (Zebrafish).